A 234-amino-acid polypeptide reads, in one-letter code: Uracil-DNA glycosylase (234 aa).

The active-site Proton acceptor is the Asp68.

It belongs to the uracil-DNA glycosylase (UDG) superfamily. UNG family.

It is found in the cytoplasm. The enzyme catalyses Hydrolyzes single-stranded DNA or mismatched double-stranded DNA and polynucleotides, releasing free uracil.. Excises uracil residues from the DNA which can arise as a result of misincorporation of dUMP residues by DNA polymerase or due to deamination of cytosine. This is Uracil-DNA glycosylase from Ruegeria sp. (strain TM1040) (Silicibacter sp.).